The chain runs to 93 residues: Small ribosomal subunit protein uS15 (93 aa).

Belongs to the universal ribosomal protein uS15 family. As to quaternary structure, part of the 30S ribosomal subunit. Forms a bridge to the 50S subunit in the 70S ribosome, contacting the 23S rRNA.

Its function is as follows. One of the primary rRNA binding proteins, it binds directly to 16S rRNA where it helps nucleate assembly of the platform of the 30S subunit by binding and bridging several RNA helices of the 16S rRNA. Functionally, forms an intersubunit bridge (bridge B4) with the 23S rRNA of the 50S subunit in the ribosome. The protein is Small ribosomal subunit protein uS15 of Anaplasma marginale (strain St. Maries).